The following is a 73-amino-acid chain: YFSYNDKIIKILEAEYLNADHHFTAGTVISDKLEIACGSGILRVKKLQQESKKALNIEEFLRGTNILKDTVLK.

Belongs to the Fmt family.

The catalysed reaction is L-methionyl-tRNA(fMet) + (6R)-10-formyltetrahydrofolate = N-formyl-L-methionyl-tRNA(fMet) + (6S)-5,6,7,8-tetrahydrofolate + H(+). Functionally, attaches a formyl group to the free amino group of methionyl-tRNA(fMet). The formyl group appears to play a dual role in the initiator identity of N-formylmethionyl-tRNA by promoting its recognition by IF2 and preventing the misappropriation of this tRNA by the elongation apparatus. The sequence is that of Methionyl-tRNA formyltransferase (fmt) from Rickettsia amblyommatis (Rickettsia amblyommii).